Reading from the N-terminus, the 383-residue chain is Chorismate synthase (383 aa).

NADP(+) is bound at residue Arg-48. Residues 125–127 (RSS), Gly-286, 301–305 (HAPTS), and Arg-328 contribute to the FMN site. The tract at residues 361 to 383 (PDRLDDNPGQYETEYHPSSPQTN) is disordered.

It belongs to the chorismate synthase family. The cofactor is FMNH2.

The catalysed reaction is 5-O-(1-carboxyvinyl)-3-phosphoshikimate = chorismate + phosphate. It functions in the pathway metabolic intermediate biosynthesis; chorismate biosynthesis; chorismate from D-erythrose 4-phosphate and phosphoenolpyruvate: step 7/7. Catalyzes the anti-1,4-elimination of the C-3 phosphate and the C-6 proR hydrogen from 5-enolpyruvylshikimate-3-phosphate (EPSP) to yield chorismate, which is the branch point compound that serves as the starting substrate for the three terminal pathways of aromatic amino acid biosynthesis. This reaction introduces a second double bond into the aromatic ring system. This is Chorismate synthase from Haloquadratum walsbyi (strain DSM 16790 / HBSQ001).